The sequence spans 504 residues: Sodium-coupled neutral amino acid symporter 2 (504 aa).

The tract at residues 1–23 (MKKTEMGRFNISPDEDSSSYSSN) is disordered. Residues 1–76 (MKKTEMGRFN…HPGTTSFGMS (76 aa)) lie on the Cytoplasmic side of the membrane. The regulates protein turnover upon amino acid deprivation stretch occupies residues 1–96 (MKKTEMGRFN…SGILGLSYAM (96 aa)). Serine 12, serine 21, serine 22, and serine 55 each carry phosphoserine. A helical transmembrane segment spans residues 77-96 (VFNLSNAIVGSGILGLSYAM). Asparagine 82 provides a ligand contact to Na(+). At 97–102 (ANTGIA) the chain is on the extracellular side. A helical membrane pass occupies residues 103–123 (LFIILLTFVSIFSLYSVHLLL). The Cytoplasmic portion of the chain corresponds to 124-158 (KTANEGGSLLYEQLGHKAYGLAGKLAASGSITMQN). A helical membrane pass occupies residues 159–177 (IGAMSSYLFIVKYELPLVI). Residues 178–188 (KALMNIEDTNG) are Extracellular-facing. A helical transmembrane segment spans residues 189–209 (LWYLNGDYLVLLVSLVLILPL). Over 210–217 (SLLRNLGY) the chain is Cytoplasmic. Residues 218–238 (LGYTSGLSLLCMIFFLIVVIC) traverse the membrane as a helical segment. At 239–289 (KKFQIPCPVEAALVANETVNGTFTQAALALAFNSTADDACRPRYFIFNSQT) the chain is on the extracellular side. An intrachain disulfide couples cysteine 245 to cysteine 278. Residues asparagine 254 and asparagine 258 are each glycosylated (N-linked (GlcNAc...) asparagine). The helical transmembrane segment at 290–310 (VYAVPILTFSFVCHPAVLPIY) threads the bilayer. At 311–326 (EELKSRSRRRMMNVSK) the chain is on the cytoplasmic side. Residues 327–347 (ISFFAMFLMYLLAALFGYLTF) form a helical membrane-spanning segment. The Extracellular segment spans residues 348-368 (YGHVESELLHTYSEIVGTDIL). Residues 369–389 (LLVVRLAVLVAVTLTVPVVIF) form a helical membrane-spanning segment. Threonine 383 is a Na(+) binding site. Residues 390-410 (PIRSSVTHLLCPTKEFSWLRH) lie on the Cytoplasmic side of the membrane. Residues 411 to 431 (SIITVTILSFTNLLVIFVPTI) form a helical membrane-spanning segment. Topologically, residues 432 to 433 (RD) are extracellular. Residues 434–454 (IFGFIGASAAAMLIFILPSAF) form a helical membrane-spanning segment. Topologically, residues 455–469 (YIKLVKKEPMRSVQK) are cytoplasmic. Residues 470 to 492 (IGALCFLLSGIVVMIGSMGLIVL) traverse the membrane as a helical segment. Residues 493–504 (DWVHDASAAGGH) lie on the Extracellular side of the membrane.

It belongs to the amino acid/polyamine transporter 2 family. Post-translationally, polyubiquitination by NEDD4L regulates the degradation and the activity of SLC38A2. In terms of tissue distribution, expressed in cerebral and cerebellar astrocytes and neurons.

It is found in the cell membrane. It catalyses the reaction L-alanine(in) + Na(+)(in) = L-alanine(out) + Na(+)(out). The enzyme catalyses glycine(in) + Na(+)(in) = glycine(out) + Na(+)(out). The catalysed reaction is L-serine(in) + Na(+)(in) = L-serine(out) + Na(+)(out). It carries out the reaction L-proline(in) + Na(+)(in) = L-proline(out) + Na(+)(out). It catalyses the reaction L-methionine(in) + Na(+)(in) = L-methionine(out) + Na(+)(out). The enzyme catalyses L-histidine(in) + Na(+)(in) = L-histidine(out) + Na(+)(out). The catalysed reaction is L-asparagine(in) + Na(+)(in) = L-asparagine(out) + Na(+)(out). It carries out the reaction L-glutamine(in) + Na(+)(in) = L-glutamine(out) + Na(+)(out). It catalyses the reaction L-threonine(in) + Na(+)(in) = L-threonine(out) + Na(+)(out). The enzyme catalyses L-leucine(in) + Na(+)(in) = L-leucine(out) + Na(+)(out). The catalysed reaction is L-phenylalanine(in) + Na(+)(in) = L-phenylalanine(out) + Na(+)(out). With respect to regulation, inhibited by N-methyl-D-glucamine. Inhibited by choline. Allosteric regulation of sodium ions binding by pH. Its function is as follows. Symporter that cotransports neutral amino acids and sodium ions from the extracellular to the intracellular side of the cell membrane. The transport is pH-sensitive, Li(+)-intolerant, electrogenic, driven by the Na(+) electrochemical gradient and cotransports of neutral amino acids and sodium ions with a stoichiometry of 1:1. May function in the transport of amino acids at the blood-brain barrier. May function in the transport of amino acids in the supply of maternal nutrients to the fetus through the placenta. Maintains a key metabolic glutamine/glutamate balance underpinning retrograde signaling by dendritic release of the neurotransmitter glutamate. Transports L-proline in differentiating osteoblasts for the efficient synthesis of proline-enriched proteins and provides proline essential for osteoblast differentiation and bone formation during bone development. The protein is Sodium-coupled neutral amino acid symporter 2 of Mus musculus (Mouse).